The following is a 303-amino-acid chain: Acetylglutamate kinase (303 aa).

Substrate-binding positions include 76-77 (GG), Arg-98, and Asn-192.

The protein belongs to the acetylglutamate kinase family. ArgB subfamily.

It localises to the cytoplasm. It carries out the reaction N-acetyl-L-glutamate + ATP = N-acetyl-L-glutamyl 5-phosphate + ADP. Its pathway is amino-acid biosynthesis; L-arginine biosynthesis; N(2)-acetyl-L-ornithine from L-glutamate: step 2/4. In terms of biological role, catalyzes the ATP-dependent phosphorylation of N-acetyl-L-glutamate. The protein is Acetylglutamate kinase of Chlorobium phaeobacteroides (strain DSM 266 / SMG 266 / 2430).